The chain runs to 297 residues: Mycothiol acetyltransferase (297 aa).

N-acetyltransferase domains are found at residues 8 to 153 (DALD…PPLP) and 156 to 297 (VALR…QYAL). Residue Glu-36 participates in 1D-myo-inositol 2-(L-cysteinylamino)-2-deoxy-alpha-D-glucopyranoside binding. Residue 80–82 (LAV) coordinates acetyl-CoA. Positions 183, 223, and 231 each coordinate 1D-myo-inositol 2-(L-cysteinylamino)-2-deoxy-alpha-D-glucopyranoside. Residues 235-237 (VGV) and 242-248 (QGGGLGK) contribute to the acetyl-CoA site. Position 269 (Tyr-269) interacts with 1D-myo-inositol 2-(L-cysteinylamino)-2-deoxy-alpha-D-glucopyranoside. 274–279 (NSPAVR) serves as a coordination point for acetyl-CoA.

This sequence belongs to the acetyltransferase family. MshD subfamily. In terms of assembly, monomer.

It carries out the reaction 1D-myo-inositol 2-(L-cysteinylamino)-2-deoxy-alpha-D-glucopyranoside + acetyl-CoA = mycothiol + CoA + H(+). In terms of biological role, catalyzes the transfer of acetyl from acetyl-CoA to desacetylmycothiol (Cys-GlcN-Ins) to form mycothiol. This is Mycothiol acetyltransferase from Actinosynnema mirum (strain ATCC 29888 / DSM 43827 / JCM 3225 / NBRC 14064 / NCIMB 13271 / NRRL B-12336 / IMRU 3971 / 101).